Reading from the N-terminus, the 213-residue chain is Triosephosphate isomerase (213 aa).

7–9 (NLK) contacts substrate. Catalysis depends on histidine 88, which acts as the Electrophile. Glutamate 136 acts as the Proton acceptor in catalysis. Positions 141 and 174 each coordinate substrate.

This sequence belongs to the triosephosphate isomerase family. Homotetramer; dimer of dimers.

Its subcellular location is the cytoplasm. The enzyme catalyses D-glyceraldehyde 3-phosphate = dihydroxyacetone phosphate. It functions in the pathway carbohydrate biosynthesis; gluconeogenesis. It participates in carbohydrate degradation; glycolysis; D-glyceraldehyde 3-phosphate from glycerone phosphate: step 1/1. In terms of biological role, involved in the gluconeogenesis. Catalyzes stereospecifically the conversion of dihydroxyacetone phosphate (DHAP) to D-glyceraldehyde-3-phosphate (G3P). The chain is Triosephosphate isomerase from Thermoplasma volcanium (strain ATCC 51530 / DSM 4299 / JCM 9571 / NBRC 15438 / GSS1).